Consider the following 583-residue polypeptide: Isocitrate dehydrogenase kinase/phosphatase (583 aa).

ATP-binding positions include A315–M321 and K336. D371 is an active-site residue.

It belongs to the AceK family.

Its subcellular location is the cytoplasm. It carries out the reaction L-seryl-[isocitrate dehydrogenase] + ATP = O-phospho-L-seryl-[isocitrate dehydrogenase] + ADP + H(+). Functionally, bifunctional enzyme which can phosphorylate or dephosphorylate isocitrate dehydrogenase (IDH) on a specific serine residue. This is a regulatory mechanism which enables bacteria to bypass the Krebs cycle via the glyoxylate shunt in response to the source of carbon. When bacteria are grown on glucose, IDH is fully active and unphosphorylated, but when grown on acetate or ethanol, the activity of IDH declines drastically concomitant with its phosphorylation. The sequence is that of Isocitrate dehydrogenase kinase/phosphatase from Salmonella enteritidis PT4 (strain P125109).